Consider the following 141-residue polypeptide: Hemoglobin subunit alpha (141 aa).

One can recognise a Globin domain in the interval 1 to 141; sequence VLSSADKNNV…VSTVLTSKYR (141 aa). S3 carries the post-translational modification Phosphoserine. N6-succinyllysine is present on residues K7 and K11. K16 carries the N6-acetyllysine; alternate modification. K16 carries the N6-succinyllysine; alternate modification. Y24 bears the Phosphotyrosine mark. A Phosphoserine modification is found at S35. K40 is modified (N6-succinyllysine). S49 carries the post-translational modification Phosphoserine. H58 serves as a coordination point for O2. A heme b-binding site is contributed by H87. S102 is modified (phosphoserine). T108 is subject to Phosphothreonine. Phosphoserine is present on S124. Phosphothreonine occurs at positions 134 and 137. S138 carries the post-translational modification Phosphoserine.

It belongs to the globin family. In terms of assembly, heterotetramer of two alpha chains and two beta chains. In terms of tissue distribution, red blood cells.

Its function is as follows. Involved in oxygen transport from the lung to the various peripheral tissues. Hemopressin acts as an antagonist peptide of the cannabinoid receptor CNR1. Hemopressin-binding efficiently blocks cannabinoid receptor CNR1 and subsequent signaling. The sequence is that of Hemoglobin subunit alpha (HBA) from Panthera tigris sumatrae (Sumatran tiger).